Reading from the N-terminus, the 211-residue chain is Large ribosomal subunit protein uL3 (211 aa).

Q150 is subject to N5-methylglutamine.

This sequence belongs to the universal ribosomal protein uL3 family. In terms of assembly, part of the 50S ribosomal subunit. Forms a cluster with proteins L14 and L19. In terms of processing, methylated by PrmB.

One of the primary rRNA binding proteins, it binds directly near the 3'-end of the 23S rRNA, where it nucleates assembly of the 50S subunit. The chain is Large ribosomal subunit protein uL3 from Pseudomonas putida (strain GB-1).